We begin with the raw amino-acid sequence, 456 residues long: uncharacterized protein (456 aa).

The protein belongs to the herpesviridae UL49 family.

This is an uncharacterized protein from Equus caballus (Horse).